The primary structure comprises 191 residues: MLEKVKKIFRESAEVKLAFVELYAQQIVDVAGIIATALKDGNKVLLFGNGGSAADAQHIAAELVGRFKKERRPLPAIALTTDTSILTALGNDYGFETIFERQVEALCMPGDVAIGITTSGNSENVIRGLKKAHDLGATTIAFTGRNGGKVAQIAHYTFIVPSYETQRIQECHITLGHVLCELVEEMVCERS.

In terms of domain architecture, SIS spans 34–191; sequence IATALKDGNK…LVEEMVCERS (158 aa). A substrate-binding site is contributed by 49-51; the sequence is NGG. Zn(2+) is bound by residues histidine 58 and glutamate 62. Residues glutamate 62, 91-92, 117-119, serine 122, and glutamine 169 contribute to the substrate site; these read ND and TTS. 2 residues coordinate Zn(2+): glutamine 169 and histidine 177.

The protein belongs to the SIS family. GmhA subfamily. Zn(2+) serves as cofactor.

It localises to the cytoplasm. The catalysed reaction is 2 D-sedoheptulose 7-phosphate = D-glycero-alpha-D-manno-heptose 7-phosphate + D-glycero-beta-D-manno-heptose 7-phosphate. Its pathway is carbohydrate biosynthesis; D-glycero-D-manno-heptose 7-phosphate biosynthesis; D-glycero-alpha-D-manno-heptose 7-phosphate and D-glycero-beta-D-manno-heptose 7-phosphate from sedoheptulose 7-phosphate: step 1/1. In terms of biological role, catalyzes the isomerization of sedoheptulose 7-phosphate in D-glycero-D-manno-heptose 7-phosphate. This is Phosphoheptose isomerase from Aquifex aeolicus (strain VF5).